Consider the following 467-residue polypeptide: Glutamate--tRNA ligase 2 (467 aa).

A 'HIGH' region motif is present at residues 18–28 (PSPTGYLHVGG). The 'KMSKS' region motif lies at 238 to 242 (PLSKR). ATP is bound at residue Lys-241.

It belongs to the class-I aminoacyl-tRNA synthetase family. Glutamate--tRNA ligase type 1 subfamily. Monomer.

It localises to the cytoplasm. It carries out the reaction tRNA(Glu) + L-glutamate + ATP = L-glutamyl-tRNA(Glu) + AMP + diphosphate. Functionally, catalyzes the attachment of glutamate to tRNA(Glu) in a two-step reaction: glutamate is first activated by ATP to form Glu-AMP and then transferred to the acceptor end of tRNA(Glu). This chain is Glutamate--tRNA ligase 2, found in Fervidobacterium nodosum (strain ATCC 35602 / DSM 5306 / Rt17-B1).